The primary structure comprises 206 residues: Probable N-acetyltransferase 14 (206 aa).

Residues 6-206 form the N-acetyltransferase domain; the sequence is LSVREMREDE…MLVREFSKDL (201 aa). Residues 57 to 77 traverse the membrane as a helical segment; the sequence is FILASFALALLLPVFLAVAAV.

Belongs to the camello family.

Its subcellular location is the membrane. Its function is as follows. Probable acetyltransferase that binds the 5'-GGACTACAG-3' sequence of coproporphyrinogen oxidase promoter. Able to activate transcription of a reporter construct in vitro. In terms of biological role, probable acetyltransferase. Functionally, may act as a transcription factor regulating the expression of coproporphyrinogen oxidase by binding to a promoter regulatory element. The sequence is that of Probable N-acetyltransferase 14 (Nat14) from Mus musculus (Mouse).